Here is a 726-residue protein sequence, read N- to C-terminus: E3 SUMO-protein ligase SIZ2 (726 aa).

Residues 43 to 77 (MEQLKVLELKQICKSLDLSITGKKAVLQDRIKQFL) enclose the SAP domain. Residues 139 to 291 (TALPPYSQQQ…SISCFIVEVF (153 aa)) form the PINIT domain. The SP-RING-type zinc finger occupies 323 to 408 (DDDDIITTST…IQNCNEDVEQ (86 aa)). Residues Cys-354, His-356, Cys-377, and Cys-380 each coordinate Zn(2+). The interval 507–533 (PSESEGSSDYNPNHTSTPKGSPTMDQD) is disordered. The segment covering 510 to 533 (SEGSSDYNPNHTSTPKGSPTMDQD) has biased composition (polar residues).

This sequence belongs to the PIAS family. In terms of assembly, interacts with CDC12. Autosumoylated upon ethanol stress.

It is found in the nucleus. The protein operates within protein modification; protein sumoylation. Functionally, may act as an E3 ligase mediating SUMO/Smt3 attachment to septins. May be involved in chromosome maintenance. The chain is E3 SUMO-protein ligase SIZ2 (NFI1) from Saccharomyces cerevisiae (strain ATCC 204508 / S288c) (Baker's yeast).